The following is a 224-amino-acid chain: Glycerol-3-phosphate acyltransferase (224 aa).

A run of 5 helical transmembrane segments spans residues 14–34 (FFPL…FAVI), 64–84 (TAAI…VMLV), 98–118 (MALV…FNFA), 127–147 (LGVL…TWLI), and 160–180 (LTAA…AWYL).

The protein belongs to the PlsY family. In terms of assembly, probably interacts with PlsX.

It localises to the cell inner membrane. It carries out the reaction an acyl phosphate + sn-glycerol 3-phosphate = a 1-acyl-sn-glycero-3-phosphate + phosphate. The protein operates within lipid metabolism; phospholipid metabolism. Its function is as follows. Catalyzes the transfer of an acyl group from acyl-phosphate (acyl-PO(4)) to glycerol-3-phosphate (G3P) to form lysophosphatidic acid (LPA). This enzyme utilizes acyl-phosphate as fatty acyl donor, but not acyl-CoA or acyl-ACP. This chain is Glycerol-3-phosphate acyltransferase, found in Albidiferax ferrireducens (strain ATCC BAA-621 / DSM 15236 / T118) (Rhodoferax ferrireducens).